The chain runs to 487 residues: MKRLSELAFDNRFARLGDTFSTAVTPLPIASPRLVVASPAALALLDLEPAVADDPQLVEYCAGQCPWPGAEPRAMAYSGHQFGFYNPQLGDGRGLLLGEVINAAGERWDLHLKGAGKTPYSRMGDGRAVLRSSIREFLASEHLHALGIPTSRALCVTASDTPVWRETEERAATLLRLAPSHVRFGHFEFFYYSRQHEALRQLLDYVIGEYFADCLAQPDPYRAFFDRVLERTAALLARWQAYGFCHGVMNTDNMSILGITFDFGPYAFLDDFDPGFVCNHSDDTGRYSFDNQVPIAHWNLSALGQALTPFVDKDALLGSLKRFLPLFRGAWLELMRRRLGFTTAEADDRERIQRLLQLMQGSAVDYSRFFRELGDRPAAAALRRLREDFVDLAGFDAWAGDHLARLARENEADEAARRARMHAVNPKYILRNYLAQQAIEAAERGDYSPVRELHAVLSRPFDEQPGMERYAERPPEWGKHLEISCSS.

Residues Gly-90, Gly-92, Arg-93, Lys-113, Asp-125, Gly-126, Arg-176, and Arg-183 each contribute to the ATP site. Asp-252 serves as the catalytic Proton acceptor. Positions 253 and 262 each coordinate Mg(2+). Residue Asp-262 participates in ATP binding.

It belongs to the SELO family. Mg(2+) is required as a cofactor. It depends on Mn(2+) as a cofactor.

It catalyses the reaction L-seryl-[protein] + ATP = 3-O-(5'-adenylyl)-L-seryl-[protein] + diphosphate. It carries out the reaction L-threonyl-[protein] + ATP = 3-O-(5'-adenylyl)-L-threonyl-[protein] + diphosphate. The enzyme catalyses L-tyrosyl-[protein] + ATP = O-(5'-adenylyl)-L-tyrosyl-[protein] + diphosphate. The catalysed reaction is L-histidyl-[protein] + UTP = N(tele)-(5'-uridylyl)-L-histidyl-[protein] + diphosphate. It catalyses the reaction L-seryl-[protein] + UTP = O-(5'-uridylyl)-L-seryl-[protein] + diphosphate. It carries out the reaction L-tyrosyl-[protein] + UTP = O-(5'-uridylyl)-L-tyrosyl-[protein] + diphosphate. Its function is as follows. Nucleotidyltransferase involved in the post-translational modification of proteins. It can catalyze the addition of adenosine monophosphate (AMP) or uridine monophosphate (UMP) to a protein, resulting in modifications known as AMPylation and UMPylation. This is Protein nucleotidyltransferase YdiU from Azotobacter vinelandii (strain DJ / ATCC BAA-1303).